The following is a 445-amino-acid chain: Phosphoglucosamine mutase (445 aa).

Residue Ser101 is the Phosphoserine intermediate of the active site. The Mg(2+) site is built by Ser101, Asp240, Asp242, and Asp244. Ser101 carries the phosphoserine modification.

This sequence belongs to the phosphohexose mutase family. It depends on Mg(2+) as a cofactor. Activated by phosphorylation.

The enzyme catalyses alpha-D-glucosamine 1-phosphate = D-glucosamine 6-phosphate. Functionally, catalyzes the conversion of glucosamine-6-phosphate to glucosamine-1-phosphate. The polypeptide is Phosphoglucosamine mutase (Azotobacter vinelandii (strain DJ / ATCC BAA-1303)).